A 296-amino-acid polypeptide reads, in one-letter code: Nucleotide-binding protein M28_Spy0517 (296 aa).

An ATP-binding site is contributed by 13 to 20; it reads GMSGAGKT. 63–66 contacts GTP; the sequence is DMRS.

The protein belongs to the RapZ-like family.

In terms of biological role, displays ATPase and GTPase activities. This Streptococcus pyogenes serotype M28 (strain MGAS6180) protein is Nucleotide-binding protein M28_Spy0517.